Consider the following 198-residue polypeptide: Ras-like protein 2 (198 aa).

GTP is bound at residue 18–25 (GDGGVGKS). An Effector region motif is present at residues 40–48 (YDPTIEDSY). GTP is bound by residues 65-69 (DTAGQ) and 124-127 (NKCD). Cys-195 bears the Cysteine methyl ester mark. The S-farnesyl cysteine moiety is linked to residue Cys-195. The propeptide at 196–198 (IVM) is removed in mature form.

The protein belongs to the small GTPase superfamily. Ras family.

It is found in the cell membrane. The catalysed reaction is GTP + H2O = GDP + phosphate + H(+). With respect to regulation, alternates between an inactive form bound to GDP and an active form bound to GTP. Activated by a guanine nucleotide-exchange factor (GEF) and inactivated by a GTPase-activating protein (GAP). This Mucor circinelloides f. lusitanicus (Mucor racemosus var. lusitanicus) protein is Ras-like protein 2 (RAS2).